The chain runs to 93 residues: Acylphosphatase (93 aa).

An Acylphosphatase-like domain is found at 7–93 (CLKAVISGKV…GEFRAFEILR (87 aa)). Active-site residues include arginine 22 and asparagine 40.

Belongs to the acylphosphatase family.

It catalyses the reaction an acyl phosphate + H2O = a carboxylate + phosphate + H(+). In Acaryochloris marina (strain MBIC 11017), this protein is Acylphosphatase (acyP).